A 207-amino-acid chain; its full sequence is Enolase (207 aa).

Glutamine 162 serves as a coordination point for (2R)-2-phosphoglycerate. The active-site Proton donor is the glutamate 204.

The protein belongs to the enolase family.

Its subcellular location is the cytoplasm. The protein localises to the secreted. The protein resides in the cell surface. It carries out the reaction (2R)-2-phosphoglycerate = phosphoenolpyruvate + H2O. Its pathway is carbohydrate degradation; glycolysis; pyruvate from D-glyceraldehyde 3-phosphate: step 4/5. Its function is as follows. Catalyzes the reversible conversion of 2-phosphoglycerate (2-PG) into phosphoenolpyruvate (PEP). It is essential for the degradation of carbohydrates via glycolysis. The sequence is that of Enolase from Campylobacter fetus.